A 155-amino-acid polypeptide reads, in one-letter code: Ribonuclease H (155 aa).

The region spanning 1-142 (MLKQVEIFTD…CDELARAAAM (142 aa)) is the RNase H type-1 domain. Residues Asp-10, Glu-48, Asp-70, and Asp-134 each contribute to the Mg(2+) site.

Belongs to the RNase H family. In terms of assembly, monomer. Mg(2+) serves as cofactor.

The protein resides in the cytoplasm. It catalyses the reaction Endonucleolytic cleavage to 5'-phosphomonoester.. Endonuclease that specifically degrades the RNA of RNA-DNA hybrids. The chain is Ribonuclease H from Citrobacter koseri (strain ATCC BAA-895 / CDC 4225-83 / SGSC4696).